A 94-amino-acid polypeptide reads, in one-letter code: MVYISNGQVLDSRSQSPWRLSLITDFFWGIAEFVVLFFKTLLQQDVKKRRSYGNSSDSRYDDGRGPPGNPPRRMGRINHLRGPSPPPMAGGUGR.

Residues 20–42 (LSLITDFFWGIAEFVVLFFKTLL) form a helical membrane-spanning segment. The segment at 48-94 (KRRSYGNSSDSRYDDGRGPPGNPPRRMGRINHLRGPSPPPMAGGUGR) is disordered. Sec-92 is a non-standard amino acid (selenocysteine).

Belongs to the selenoprotein K family. Interacts with DERL1, DERL2, DERL3 and SELENOS. The SELENOK-SELENOS complex interacts with VCP. Interacts with ZDHHC6. Cleaved by CAPN2/m-calpain in resting macrophages but not in activated macrophages. Macrophage activation up-regulates expression of the calpain inhibitor CAST/calpastatin, resulting in inhibition of CAPN2 activity. Post-translationally, truncated SELENOK proteins produced by failed UGA/Sec decoding are ubiquitinated by the CRL2(KLHDC2) complex, which recognizes the diglycine (Gly-Gly) at the C-terminus of truncated SELENOK proteins. As to expression, highly expressed in heart.

Its subcellular location is the endoplasmic reticulum membrane. It localises to the cell membrane. Functionally, required for Ca(2+) flux in immune cells and plays a role in T-cell proliferation and in T-cell and neutrophil migration. Involved in endoplasmic reticulum-associated degradation (ERAD) of soluble glycosylated proteins. Required for palmitoylation and cell surface expression of CD36 and involved in macrophage uptake of low-density lipoprotein and in foam cell formation. Together with ZDHHC6, required for palmitoylation of ITPR1 in immune cells, leading to regulate ITPR1 stability and function. Plays a role in protection of cells from ER stress-induced apoptosis. Protects cells from oxidative stress when overexpressed in cardiomyocytes. The chain is Selenoprotein K from Homo sapiens (Human).